The primary structure comprises 170 residues: Shikimate kinase (170 aa).

ATP is bound at residue 11-16 (LSGKST). A Mg(2+)-binding site is contributed by serine 15. Residues aspartate 33, arginine 57, and glycine 79 each contribute to the substrate site. ATP is bound at residue arginine 119. Residue arginine 137 participates in substrate binding.

This sequence belongs to the shikimate kinase family. In terms of assembly, monomer. Mg(2+) serves as cofactor.

The protein resides in the cytoplasm. The catalysed reaction is shikimate + ATP = 3-phosphoshikimate + ADP + H(+). Its pathway is metabolic intermediate biosynthesis; chorismate biosynthesis; chorismate from D-erythrose 4-phosphate and phosphoenolpyruvate: step 5/7. Its function is as follows. Catalyzes the specific phosphorylation of the 3-hydroxyl group of shikimic acid using ATP as a cosubstrate. The chain is Shikimate kinase from Clostridium botulinum (strain Kyoto / Type A2).